The primary structure comprises 730 residues: MAAVAAEAAATAASPGEGGAGEAEPELEPIPGSEAGTPLPVTATEAAVPDGEADGRQSAPQADEQPLPPPPPPPPPGELADSSEAEEAKPPEPAAVPVSPPEQPPAAPEQPEDAPRPPPAPALVPPAGGDSAVSHLIPGSEVRVTLDHIIEDALVVSFRLGEKLFSGVLMDLSKRFGPHGIPVTVFPKREYKDKPDAMQLQSTTFQEGIEVKQEVNGAVPDDLSPVPPPERLWASKPPPLFHEGAPYPPPLFIRDTYNQSIPQPPPRKIKRPKRKMYREEPTSIMNAIKLRPRQVLCDKCKNSVVAEKKEIRKGSSDSSRYEDKKRRNDSVATVNKKLKTDHKVDGKNQNESQRRNTVVRVSSIAHSRGRVVKVSAQANTSKAQLNTKKVLQSKNMDHAKAREVLKIAKEKAQKKQSETSTSKTAHAKVHFTRRYQSPSSGSLPPRVRLKPQRYRNEENDSSLKTGLEKIRSGKLAPKPQSRCTSTRSAGEAPSEKPSPSEGPEESAGEVQDTSRVRVPGEQEELRMLGKKGSKSSISVYLTLNQETSDSSSASVCSIDSMDDLKSSNSECSSSESFVFPPGCMHAPSASSTSTSFSSKEENSLRNSLKMKIFSKNVSKCITPDGRTICVGDIVWAKIYGFPWWPARILTITVSRKDNGLLARQEARISWFASPTTSSLALSQLSPFLENFQLRFNKKRKGLYRRAITEAAKAAKQLTPEVRALLTQFET.

Positions 1–15 (MAAVAAEAAATAASP) are enriched in low complexity. Residues 1 to 134 (MAAVAAEAAA…PPAGGDSAVS (134 aa)) form a disordered region. Over residues 66–77 (PLPPPPPPPPPG) the composition is skewed to pro residues. 2 positions are modified to phosphoserine: S82 and S99. Positions 91–108 (PEPAAVPVSPPEQPPAAP) are enriched in pro residues. An interaction with HDAC1 and MTA1 region spans residues 128–346 (GGDSAVSHLI…KLKTDHKVDG (219 aa)). K188 participates in a covalent cross-link: Glycyl lysine isopeptide (Lys-Gly) (interchain with G-Cter in SUMO2). 3 disordered regions span residues 257 to 276 (YNQS…KRKM), 311 to 355 (IRKG…SQRR), and 409 to 531 (KEKA…LGKK). The segment covering 267–276 (RKIKRPKRKM) has biased composition (basic residues). Composition is skewed to basic and acidic residues over residues 311–329 (IRKG…RRND) and 341–354 (DHKV…ESQR). Positions 396 to 547 (MDHAKAREVL…SVYLTLNQET (152 aa)) are interaction with the H2A.Z/H2AZ1. Positions 488–501 (SAGEAPSEKPSPSE) are enriched in low complexity. Residues 512 to 527 (DTSRVRVPGEQEELRM) are compositionally biased toward basic and acidic residues. The 61-residue stretch at 630 to 690 (VGDIVWAKIY…LSQLSPFLEN (61 aa)) folds into the PWWP domain.

As to quaternary structure, component of a MTA1-specific subcomplex of the NuRD complex (M1HR), which is composed of PWWP2A, MTA1/2, HDAC1/2, and RBBP4/7 but does not contain CHD4 and MBD3. Interacts with MTA1; the interaction mediates the association of PWWP2A with the M1HR complex. Interacts with H2A.Z/H2AZ1. Interacts (via PWWP domain) with histone H3 trimethylated at 'Lys-36' (H3K36me3). Does not interact with CHD4 and MBD3.

It is found in the nucleus. Chromatin-binding protein that acts as an adapter between distinct nucleosome components (H3K36me3 or H2A.Z) and chromatin-modifying complexes, contributing to the regulation of the levels of histone acetylation at actively transcribed genes. Competes with CHD4 and MBD3 for interaction with MTA1 to form a NuRD subcomplex, preventing the formation of full NuRD complex (containing CHD4 and MBD3), leading to recruitment of HDACs to gene promoters resulting in turn in the deacetylation of nearby H3K27 and H2A.Z. Plays a role in facilitating transcriptional elongation and repression of spurious transcription initiation through regulation of histone acetylation. Essential for proper mitosis progression. This Mus musculus (Mouse) protein is PWWP domain-containing protein 2A (Pwwp2a).